The primary structure comprises 197 residues: MPQDAPAGLAPGFLVAAPALADPNFNGSLVLMAEHHAQGALGFVVNRPGPITVADVLGGLDAGLRERAEGAGRADDLVLVGGPVQPERLWILFRPGPAAPEEGAVALGAGLALGGSRELLEALVRARDPGPYLLLLGYAGWAPLQVEREVGEGAWVPLPLQGDLVFDVPMEKRWETAVRRLGLDPAGFLVGGGGAEA.

It belongs to the UPF0301 (AlgH) family.

The chain is UPF0301 protein AnaeK_4073 from Anaeromyxobacter sp. (strain K).